We begin with the raw amino-acid sequence, 169 residues long: PTS system glucose-specific EIIA component (169 aa).

Residues 39 to 143 (DVVFAEKIVG…STLTPVVISN (105 aa)) form the PTS EIIA type-1 domain. Residues His-76 and His-91 each contribute to the Zn(2+) site. The active-site Tele-phosphohistidine intermediate; for EIIA activity is His-91. Residue His-91 is modified to Phosphohistidine; by HPr.

As to quaternary structure, heterodimer with glycerol kinase (glpk). Zn(2+) is required as a cofactor.

It is found in the cytoplasm. Functionally, the phosphoenolpyruvate-dependent sugar phosphotransferase system (sugar PTS), a major carbohydrate active transport system, catalyzes the phosphorylation of incoming sugar substrates concomitantly with their translocation across the cell membrane. The enzyme II complex composed of PtsG and Crr is involved in glucose transport. In Salmonella typhi, this protein is PTS system glucose-specific EIIA component (crr).